The sequence spans 298 residues: MARTGFQGRKLGEAFEIWTEMLREENITILMGLSGAMVPAGMRKIIAWLIRNRYIDVLVSTGANLFHDIHEAMGFRHFMGSEHVNDCKLFEEGIDRIHDVFAYEKEFNVIDYTLAEIISEMSGVMSSREFLEEIAGRLNVKDRNSIVIAAYESKVPIFSPAIADSSIGIAAALAKREVVIDTIRDVEELTEIVVNSEKTGVIYVGGGVPKNFIQQTEVVARLKGYDVRGHEYAIQITTDVPQFGGLSGCTFEEGVSWGKISGKAKKVQVNCDATIALPVLAHGLIGIRRQKYPIFNGL.

Residue Lys259 is the Nucleophile of the active site.

Belongs to the deoxyhypusine synthase family. It depends on NAD(+) as a cofactor.

It catalyses the reaction [eIF5A protein]-L-lysine + spermidine = [eIF5A protein]-deoxyhypusine + propane-1,3-diamine. The protein operates within protein modification; eIF5A hypusination. Catalyzes the NAD-dependent oxidative cleavage of spermidine and the subsequent transfer of the butylamine moiety of spermidine to the epsilon-amino group of a specific lysine residue of the eIF-5A precursor protein to form the intermediate deoxyhypusine residue. The chain is Probable deoxyhypusine synthase 2 (dys2) from Archaeoglobus fulgidus (strain ATCC 49558 / DSM 4304 / JCM 9628 / NBRC 100126 / VC-16).